The sequence spans 465 residues: MAP kinase-interacting serine/threonine-protein kinase 2 (465 aa).

The segment at 23–72 (ELAFSLDQPDHGDSDFGLQCSARPDMPASQPIDIPDAKKRGKKKKRGRAT) is disordered. Residues 60–66 (KKRGKKK) carry the Nuclear localization signal motif. Ser74 bears the Phosphoserine mark. Positions 84–388 (QLQEDVLGEG…TPMVLQRNSC (305 aa)) constitute a Protein kinase domain. Residues 90–98 (LGEGAHARV) and Lys113 contribute to the ATP site. 160–162 (EKM) is a binding site for staurosporine. The active-site Proton acceptor is Asp205. Glu209 is a staurosporine binding site. A phosphothreonine mark is found at Thr244 and Thr249. 3 residues coordinate Zn(2+): Cys299, Cys311, and Cys314. A Phosphothreonine modification is found at Thr379. Phosphoserine is present on residues Ser437 and Ser440. The MAP kinase binding signature appears at 444–448 (LAQRR). Ser452 carries the post-translational modification Phosphoserine.

Belongs to the protein kinase superfamily. CAMK Ser/Thr protein kinase family. Monomer. Interacts with the C-terminal regions of EIF4G1 and EIF4G2; this interaction is promoted when MAPK pathways are repressed but repressed upon ERK proteins activation. Also binds to dephosphorylated MAPK3/ERK1 and MAPK1/ERK2. Isoform 1 interaction with phosphorylated MAPK3/ERK1 and MAPK1/ERK2 protects it from dephosphorylation and inactivation. Isoform 2 interacts with ESR2 and EIF4E in the nucleus. Mg(2+) serves as cofactor. Requires Zn(2+) as cofactor. Dual phosphorylation of Thr-244 and Thr-249 activates the kinase. Phosphorylation of Thr-379 activates the kinase. Phosphorylated upon arsenic trioxide As(2)O(3) treatment. Phosphorylated by MAPK1/ERK2, MAPK11 and MAPK14. Dephosphorylated by PP2A. As to expression, ubiquitously expressed in all tissues examined. Isoform 2 is expressed at higher levels in the ovary than is isoform 1.

Its subcellular location is the nucleus. It is found in the PML body. It localises to the cytoplasm. The catalysed reaction is L-seryl-[protein] + ATP = O-phospho-L-seryl-[protein] + ADP + H(+). It carries out the reaction L-threonyl-[protein] + ATP = O-phospho-L-threonyl-[protein] + ADP + H(+). Its activity is regulated as follows. Inhibited by CGP57380 and staurosporine. Activated by phosphorylation in a negative-feedback regulatory manner in response to chemotherapy (e.g. cytarabine) and thus impairs the generation of antileukemic responses. Functionally, serine/threonine-protein kinase that phosphorylates SFPQ/PSF, HNRNPA1 and EIF4E. May play a role in the response to environmental stress and cytokines. Appears to regulate translation by phosphorylating EIF4E, thus increasing the affinity of this protein for the 7-methylguanosine-containing mRNA cap. Required for mediating PP2A-inhibition-induced EIF4E phosphorylation. Triggers EIF4E shuttling from cytoplasm to nucleus. Isoform 1 displays a high basal kinase activity, but isoform 2 exhibits a very low kinase activity. Acts as a mediator of the suppressive effects of IFNgamma on hematopoiesis. Negative regulator for signals that control generation of arsenic trioxide As(2)O(3)-dependent apoptosis and anti-leukemic responses. Involved in anti-apoptotic signaling in response to serum withdrawal. This Homo sapiens (Human) protein is MAP kinase-interacting serine/threonine-protein kinase 2 (MKNK2).